The chain runs to 1069 residues: Adenylate-forming reductase (1069 aa).

The interval 20 to 391 (HPEDPKAVKS…WKLRQDINYR (372 aa)) is adenylation (A) domain. AMP-binding positions include H262, 357-358 (AH), T362, and 437-440 (AVGR). One can recognise a Carrier domain in the interval 576-656 (DSLEEDLKDL…KLGASLRHLA (81 aa)). S612 carries the post-translational modification O-(pantetheine 4'-phosphoryl)serine. A reductase (R) domain region spans residues 686–1032 (TVLLTGSTGN…TGKVILDTSR (347 aa)). NADP(+)-binding positions include 693–696 (TGNL), R719, 785–787 (NAW), Y863, and K867.

Belongs to the adenylate-forming reductase family.

The enzyme catalyses 5-methylorsellinate + ATP + NADPH + H(+) = 2,4-dihydroxy 5,6-dimethylbenzaldehyde + AMP + diphosphate + NADP(+). It participates in secondary metabolite biosynthesis. Non-canonical non-ribosomal peptide synthetase; part of the cluster A that mediates the biosynthesis of azasperpyranones, members of the azaphilone family that exhibit anti-cancer activities. Azasperpyranones are synthesized by 2 clusters, A and B. Cluster A is responsible for the production of the polyhydric phenol moiety while the azaphilonoid scaffold is produced by the cluster B. The non-reducing polyketide synthase ATEG_03629 produces 5-methyl orsellinic acid, which is then reduced to 5-methyl orsellinic aldehyde by the NRPS-like protein ATEG_03630. 5-methyl orsellinic aldehyde is then first hydroxylated by the FAD-dependent monooxygenase ATEG_03635 and subsequently hydroxylated by the cytochrome P450 monooxygenase ATEG_03631 to produce the unstable polyhydric phenol precursor of azasperpyranones. On the other hand, the polyketide synthase ATEG_07659 is responsible for producing the 3,5-dimethyloctadienone moiety from acetyl-CoA, three malonyl-CoA, and two S-adenosyl methionines (SAM). The 3,5-dimethyloctadienone moiety is then loaded onto the SAT domain of ATEG_07661 and extended with four malonyl-CoA and one SAM, which leads to the formation of 2,4-dihydroxy-6-(5,7-dimethyl-2-oxo-trans-3-trans-5-nonadienyl)-3-methylbenzaldehyde (compound 8) after reductive release and aldol condensation. The FAD-dependent monooxygenase ATEG_07662 is the next enzyme in the biosynthesis sequence and hydroxylates the side chain at the benzylic position of compound 8. In Aspergillus nidulans, afoF, the ortholog of the FAD-dependent oxygenase ATEG_07660, is the key enzyme for the biosynthesis of asperfuranone by catalyzing the hydroxylation at C-8 of to prevent the formation of a six-membered ring hemiacetal intermediate and thus facilitating the formation of a five-membered ring to produce asperfuranone. In Aspergillus terreus, ATEG_07660 is probably not functional, which leads to the formation of the six-membered ring hemiacetal intermediate presperpyranone instead of asperfuranone. Finally, ATEG_03636 is involved in the condensation of the polyhydric phenol moiety produced by cluster A and the perasperpyranone precursor produced by cluster B, to yield azasperpyranone A. Further modifications of azasperpyranone A result in the production of derivatives, including azasperpyranone B to F. The protein is Adenylate-forming reductase of Aspergillus terreus (strain NIH 2624 / FGSC A1156).